The following is a 205-amino-acid chain: Rho-related protein racI (205 aa).

12–19 serves as a coordination point for GTP; the sequence is GDSKTGKT. Residues 34–42 carry the Effector region motif; sequence YVPSHVDAT. GTP-binding positions include 59–63 and 119–122; these read DSSAL and TKCD. Residue C202 is modified to Cysteine methyl ester. A lipid anchor (S-geranylgeranyl cysteine) is attached at C202. Positions 203-205 are cleaved as a propeptide — removed in mature form; the sequence is IIQ.

It belongs to the small GTPase superfamily. Rho family.

The protein localises to the cell membrane. This is Rho-related protein racI (racI) from Dictyostelium discoideum (Social amoeba).